The following is a 365-amino-acid chain: 3-dehydroquinate synthase (365 aa).

NAD(+)-binding positions include 106–110 (GVIGD), 130–131 (TT), Lys142, Lys151, and 169–172 (FFAT). Positions 184, 247, and 264 each coordinate Zn(2+).

This sequence belongs to the sugar phosphate cyclases superfamily. Dehydroquinate synthase family. Co(2+) is required as a cofactor. It depends on Zn(2+) as a cofactor. The cofactor is NAD(+).

Its subcellular location is the cytoplasm. The enzyme catalyses 7-phospho-2-dehydro-3-deoxy-D-arabino-heptonate = 3-dehydroquinate + phosphate. Its pathway is metabolic intermediate biosynthesis; chorismate biosynthesis; chorismate from D-erythrose 4-phosphate and phosphoenolpyruvate: step 2/7. Its function is as follows. Catalyzes the conversion of 3-deoxy-D-arabino-heptulosonate 7-phosphate (DAHP) to dehydroquinate (DHQ). The polypeptide is 3-dehydroquinate synthase (Listeria monocytogenes serotype 4b (strain CLIP80459)).